A 500-amino-acid polypeptide reads, in one-letter code: Aspartyl/glutamyl-tRNA(Asn/Gln) amidotransferase subunit B (500 aa).

The protein belongs to the GatB/GatE family. GatB subfamily. In terms of assembly, heterotrimer of A, B and C subunits.

The enzyme catalyses L-glutamyl-tRNA(Gln) + L-glutamine + ATP + H2O = L-glutaminyl-tRNA(Gln) + L-glutamate + ADP + phosphate + H(+). It carries out the reaction L-aspartyl-tRNA(Asn) + L-glutamine + ATP + H2O = L-asparaginyl-tRNA(Asn) + L-glutamate + ADP + phosphate + 2 H(+). In terms of biological role, allows the formation of correctly charged Asn-tRNA(Asn) or Gln-tRNA(Gln) through the transamidation of misacylated Asp-tRNA(Asn) or Glu-tRNA(Gln) in organisms which lack either or both of asparaginyl-tRNA or glutaminyl-tRNA synthetases. The reaction takes place in the presence of glutamine and ATP through an activated phospho-Asp-tRNA(Asn) or phospho-Glu-tRNA(Gln). The chain is Aspartyl/glutamyl-tRNA(Asn/Gln) amidotransferase subunit B from Clavibacter michiganensis subsp. michiganensis (strain NCPPB 382).